The sequence spans 556 residues: Carotenoid-cleaving dioxygenase, mitochondrial (556 aa).

Fe cation is bound by residues His-203, His-263, His-334, and His-550.

This sequence belongs to the carotenoid oxygenase family. Fe(2+) is required as a cofactor.

Its subcellular location is the mitochondrion. It carries out the reaction all-trans-beta-carotene + O2 = beta-ionone + all-trans-10'-apo-beta-carotenal. The catalysed reaction is 5-cis-lycopene + O2 = 5-cis-10'-apo-lycopenal + (3E,5E)-6,10-dimethylundeca-3,5,9-trien-2-one. The enzyme catalyses 13-cis-lycopene + O2 = 13-cis-10'-apo-lycopenal + (3E,5E)-6,10-dimethylundeca-3,5,9-trien-2-one. It catalyses the reaction lutein + O2 = (3R,6R)-hydroxy-alpha-ionone + (3R)-3-hydroxy-10'-apo-beta-carotenal. It carries out the reaction lutein + O2 = (3R,6R)-3-hydroxy-10'-apo-alpha-carotenal + (3R)-hydroxy-beta-ionone. The catalysed reaction is all-trans-zeaxanthin + 2 O2 = 4,9-dimethyldodeca-2,4,6,8,10-pentaenedial + 2 (3R)-hydroxy-beta-ionone. The enzyme catalyses all-trans-zeaxanthin + O2 = (3R)-3-hydroxy-10'-apo-beta-carotenal + (3R)-hydroxy-beta-ionone. It catalyses the reaction beta-cryptoxanthin + O2 = all-trans-10'-apo-beta-carotenal + (3R)-hydroxy-beta-ionone. It carries out the reaction all-trans-10'-apo-beta-carotenal + O2 = beta-ionone + 4,9-dimethyldodeca-2,4,6,8,10-pentaenedial. The catalysed reaction is (3R)-3-hydroxy-10'-apo-beta-carotenal + O2 = 4,9-dimethyldodeca-2,4,6,8,10-pentaenedial + (3R)-hydroxy-beta-ionone. The enzyme catalyses (3R,6R)-3-hydroxy-10'-apo-alpha-carotenal + O2 = (3R,6R)-hydroxy-alpha-ionone + 4,9-dimethyldodeca-2,4,6,8,10-pentaenedial. Its function is as follows. Broad specificity mitochondrial dioxygenase that mediates the asymmetric oxidative cleavage of carotenoids. Cleaves carotenes (pure hydrocarbon carotenoids) such as all-trans-beta-carotene and lycopene as well as xanthophylls (oxygenated carotenoids) such as zeaxanthin, lutein and beta-cryptoxanthin at both the 9,10 and the 9',10' carbon-carbon double bond. Through its function in carotenoids metabolism regulates oxidative stress and the production of important signaling molecules. This is Carotenoid-cleaving dioxygenase, mitochondrial from Macaca fascicularis (Crab-eating macaque).